Here is a 125-residue protein sequence, read N- to C-terminus: Histone H1-like protein HC1 (125 aa).

This sequence belongs to the histone H1/H5 family. HCT subfamily.

Functionally, might have a role analogous to that of eukaryotic histone proteins. The chain is Histone H1-like protein HC1 (hctA) from Chlamydia muridarum (strain MoPn / Nigg).